The chain runs to 58 residues: SLFELEGKMILQETGKNPAKSYGVYGCNCGVGGRGKPKDATDRCCYVHKCCYKKLTGC.

C29 and C45 are joined by a disulfide.

As to expression, expressed by the venom gland.

It localises to the secreted. Wasp venom phospholipase A2 homolog that lacks enzymatic activity. The chain is Basic phospholipase A2 homolog PocTX from Polybia occidentalis (Paper wasp).